A 263-amino-acid chain; its full sequence is Single-stranded DNA-binding protein WHY1, chloroplastic (263 aa).

Residues 1-47 constitute a chloroplast transit peptide; that stretch reads MSQLLSTPLMAVNSNPRFLSSSSVLVTGGFAVKRHGFALKPTTKTVK. A required for ssDNA binding region spans residues 89–94; sequence KGKAAL. Residues 167-180 carry the Nuclear localization signal motif; sequence KGKSDEGKVRKVLK.

The protein belongs to the Whirly family. As to quaternary structure, homotetramer.

It localises to the plastid. It is found in the chloroplast. The protein resides in the nucleus. In terms of biological role, single-stranded DNA-binding protein that functions in both chloroplasts and nucleus. In chloroplasts, maintains plastid genome stability by preventing break-induced and short homology-dependent illegitimate recombinations. In nucleus, modulates telomere length homeostasis by inhibiting the action of the telomerase at the extreme termini of chromosomes. Is recruited to a distal element upstream of the kinesin KP1 to mediate the transcriptional repression of KP1. Is required for full salicylic acid-dependent plant disease resistance responses. Can bind double-stranded DNA in vivo. The polypeptide is Single-stranded DNA-binding protein WHY1, chloroplastic (WHY1) (Arabidopsis thaliana (Mouse-ear cress)).